A 412-amino-acid chain; its full sequence is Protein arginine N-methyltransferase 2 (412 aa).

Residues 48-65 show a composition bias toward basic and acidic residues; it reads EKNRNGDKEFRESTDDNK. Disordered regions lie at residues 48 to 69 and 169 to 189; these read EKNR…TSNT and SVQT…DDAT. A phosphoserine mark is found at Ser181 and Ser184. The RMT2 domain occupies 189–412; it reads TAANQQVYLK…YYYHPRITFA (224 aa). S-adenosyl-L-methionine contacts are provided by residues Tyr196, Met226, 250–255, 271–273, 298–299, and Asp319; these read FGMGII, EAH, and WQ.

This sequence belongs to the class I-like SAM-binding methyltransferase superfamily. RMT2 methyltransferase family. As to quaternary structure, monomer. Interacts with nucleoporins NUP49, NUP57 and NUP100.

Its subcellular location is the cytoplasm. It localises to the nucleus. Its function is as follows. S-adenosyl-L-methionine-dependent protein-arginine N-methyltransferase that methylates the delta-nitrogen atom of arginine residues to form N5-methylarginine (type IV) in target proteins. Monomethylates ribosomal protein L12 (RPL12A/RPL12B) at 'Arg-67'. This Saccharomyces cerevisiae (strain ATCC 204508 / S288c) (Baker's yeast) protein is Protein arginine N-methyltransferase 2.